The sequence spans 672 residues: MTEPSLLPAAKMEGLALLPLTSPCPRIPRARISRQPGRWAHLGCSPGLSTGPTNLQQHPQKPRPADCSHSRLSWAESLSMDGFWMEVERIQQRAEVKKEDCGEGRSQLLEGDTESQWLQDTGLSGLAGGLGLDGDHQGLLSTLTQTQVAAVCRRLDIYARSARRRQKAPVRDVRDIFGVFTSRELAPENGVSGMKWTKINSEDSASPLRSAEPGGPQELAGMEEVFNMDSAYSEQAAVLLQRAWPSPGGTTAWGKGPLPRFRIPKGRLGVTRIGDLSSRDMKKIPPLALIELTALYDILGLDLKRCKGGKWKGPDSGLFGVPLHSLLEADHRVFPSTQVPLLLQALLSCLEKRGLDTEGILRVPGSQARVKGLEQKLERDFYAGLVSWDKVHPNDASDLLKRFLRKLPVPLLTAEYLPAFASVPDIPDLKQRLQALHLLVLLLPEPNRNTLKALLEFLRKVAAQEQHNKMTLWNVSTVMVPSLFLPRGRPPKLTKGGKQLAEGAAEVVCMMVQYQDLLWTVASFLVAQVRKLNDSNGRRSQLCDGGLKTWLWRTHVDRDKAGEGLEATPKVAKIQVQATWPSMDLLQVPLNPSTRVTHVLKLFTEHLNPGSQPEEGSENPNSLLSHNTKPVTFLVYEVGGNIGERRLDPDAYLLDLYRANPHGEWVIRQSPT.

Residues G43–S68 are disordered. Polar residues predominate over residues G47 to P59. The Rho-GAP domain maps to V321 to W519.

GTPase activator for the Rho-type GTPases by converting them to an inactive GDP-bound state. The chain is Rho GTPase-activating protein 40 from Mus musculus (Mouse).